A 451-amino-acid polypeptide reads, in one-letter code: uncharacterized protein (451 aa).

The TRAM domain maps to 1–59 (MLHKNDIIETEISDISHEGMGIAKVDGFVFFVENALPGEIIKMRVLKLRKRIGYGKVEE). S-adenosyl-L-methionine-binding residues include glutamine 283, tyrosine 312, glutamate 333, and aspartate 381. Residue cysteine 408 is the Nucleophile of the active site.

Belongs to the class I-like SAM-binding methyltransferase superfamily. RNA M5U methyltransferase family.

This is an uncharacterized protein from Streptococcus agalactiae serotype V (strain ATCC BAA-611 / 2603 V/R).